We begin with the raw amino-acid sequence, 362 residues long: Protein Wnt-16 (362 aa).

The N-terminal stretch at 1-29 (MDRAALLGLSRLCALWAAVLALFPCGAQG) is a signal peptide. Intrachain disulfides connect Cys-81–Cys-92, Cys-136–Cys-144, and Cys-146–Cys-165. Asn-140 carries an N-linked (GlcNAc...) asparagine glycan. An N-linked (GlcNAc...) asparagine glycan is attached at Asn-186. 8 cysteine pairs are disulfide-bonded: Cys-218/Cys-232, Cys-220/Cys-227, Cys-291/Cys-322, Cys-307/Cys-317, Cys-321/Cys-361, Cys-337/Cys-352, Cys-339/Cys-349, and Cys-344/Cys-345. Ser-224 carries O-palmitoleoyl serine; by PORCN lipidation. A glycan (N-linked (GlcNAc...) asparagine) is linked at Asn-308.

It belongs to the Wnt family. Post-translationally, palmitoleoylation is required for efficient binding to frizzled receptors. Depalmitoleoylation leads to Wnt signaling pathway inhibition.

The protein resides in the secreted. It is found in the extracellular space. Its subcellular location is the extracellular matrix. Ligand for members of the frizzled family of seven transmembrane receptors. Probable developmental protein. May be a signaling molecule which affects the development of discrete regions of tissues. Is likely to signal over only few cell diameters. The chain is Protein Wnt-16 (WNT16) from Bos taurus (Bovine).